We begin with the raw amino-acid sequence, 413 residues long: Putative competence-damage inducible protein (413 aa).

This sequence belongs to the CinA family.

This is Putative competence-damage inducible protein from Thermoanaerobacter sp. (strain X514).